A 526-amino-acid chain; its full sequence is Peptide chain release factor 3 (526 aa).

A tr-type G domain is found at 9 to 277 (DLRRTFAIIS…GLTKWAPKPL (269 aa)). GTP is bound by residues 18 to 25 (SHPDAGKT), 86 to 90 (DTPGH), and 140 to 143 (NKMD).

The protein belongs to the TRAFAC class translation factor GTPase superfamily. Classic translation factor GTPase family. PrfC subfamily.

The protein resides in the cytoplasm. Its function is as follows. Increases the formation of ribosomal termination complexes and stimulates activities of RF-1 and RF-2. It binds guanine nucleotides and has strong preference for UGA stop codons. It may interact directly with the ribosome. The stimulation of RF-1 and RF-2 is significantly reduced by GTP and GDP, but not by GMP. The sequence is that of Peptide chain release factor 3 from Colwellia psychrerythraea (strain 34H / ATCC BAA-681) (Vibrio psychroerythus).